Consider the following 253-residue polypeptide: Transposase for insertion sequence element IS904 (253 aa).

The Integrase catalytic domain maps to Lys-90–Ser-253.

Belongs to the transposase IS3/IS150/IS904 family.

In terms of biological role, involved in the transposition of the insertion sequence. The polypeptide is Transposase for insertion sequence element IS904 (nisX1) (Lactococcus lactis subsp. lactis (strain IL1403) (Streptococcus lactis)).